We begin with the raw amino-acid sequence, 310 residues long: Homoserine kinase (310 aa).

Residue P91–C101 coordinates ATP.

This sequence belongs to the GHMP kinase family. Homoserine kinase subfamily.

Its subcellular location is the cytoplasm. It carries out the reaction L-homoserine + ATP = O-phospho-L-homoserine + ADP + H(+). It functions in the pathway amino-acid biosynthesis; L-threonine biosynthesis; L-threonine from L-aspartate: step 4/5. Functionally, catalyzes the ATP-dependent phosphorylation of L-homoserine to L-homoserine phosphate. The sequence is that of Homoserine kinase from Escherichia coli O157:H7.